The sequence spans 841 residues: Phosphatidylglycerol lysyltransferase (841 aa).

At 1–8 (MTKELRSK) the chain is on the cytoplasmic side. Residues 9–29 (LFTILKIAFALTLFTIVAITL) traverse the membrane as a helical segment. Residues 30-52 (YKELSHINLKDAIKSFSKINRFW) lie on the Extracellular side of the membrane. A helical membrane pass occupies residues 53–73 (LVALFLSGGASIIVLSIYDVI). At 74-89 (LAKTLKLKIGLAKTIR) the chain is on the cytoplasmic side. A helical membrane pass occupies residues 90–110 (IGYIVNALNAVVGFGGFIGAS). Over 111–129 (VRFLFYKNTTDDKKALFHT) the chain is Extracellular. The chain crosses the membrane as a helical span at residues 130-150 (ISIVLISMLTGLSLLSILVVI). The Cytoplasmic segment spans residues 151–164 (HVFDISHIFTPYPW). Residues 165–185 (VKWLMYVVALFLPIFVVFTII) traverse the membrane as a helical segment. Residues 186 to 193 (KPVQKTHR) lie on the Extracellular side of the membrane. A helical transmembrane segment spans residues 194 to 216 (LLGVYCTIVSGVEWFVAALVLYM). Residues 217–229 (SMAIVGVQIPFAT) are Cytoplasmic-facing. The chain crosses the membrane as a helical span at residues 230–250 (FMGIFILAALSGLISFIPGGF). The Extracellular segment spans residues 251-270 (GTFDLVVLLGLKALNVNEEA). The helical transmembrane segment at 271-291 (IVLGLSLYRFAYYLFPVLIAL) threads the bilayer. Topologically, residues 292–336 (ILSTFEFRSTAKRYWEDSRILVPVKDMTSLLGSYQKDIIARIPSF) are cytoplasmic. Residues 337–357 (AIALLLLFTSLVFFLNNLTII) traverse the membrane as a helical segment. Over 358–367 (YDGLYDPNHY) the chain is Extracellular. The chain crosses the membrane as a helical span at residues 368–388 (IYYIIVSIHTCACLLLLLNVI). Topologically, residues 389–392 (GVYK) are cytoplasmic. A helical transmembrane segment spans residues 393–413 (LSKRAILFSIISVLFIFIATA). Topologically, residues 414–415 (YT) are extracellular. A helical membrane pass occupies residues 416-436 (YASFILLSWLTVIFILLLVFY). Over 437-448 (RRARVIKRPFRY) the chain is Cytoplasmic. A helical transmembrane segment spans residues 449–469 (SKLLLSVITGAIILYINHLVI). The Extracellular portion of the chain corresponds to 470-489 (KSTFYSLEIYHIEMLTSILR). A helical transmembrane segment spans residues 490-510 (YYFWITILLVAIIVGVIVWWF). Over 511–841 (EYRYRSSNSR…KVMRVIRKNN (331 aa)) the chain is Cytoplasmic.

Belongs to the LPG synthase family.

Its subcellular location is the cell membrane. It catalyses the reaction L-lysyl-tRNA(Lys) + a 1,2-diacyl-sn-glycero-3-phospho-(1'-sn-glycerol) = a 1,2-diacyl-sn-glycero-3-phospho-1'-(3'-O-L-lysyl)-sn-glycerol + tRNA(Lys). Functionally, catalyzes the transfer of a lysyl group from L-lysyl-tRNA(Lys) to membrane-bound phosphatidylglycerol (PG), which produces lysylphosphatidylglycerol (LPG), a major component of the bacterial membrane with a positive net charge. LPG synthesis contributes to bacterial virulence as it is involved in the resistance mechanism against cationic antimicrobial peptides (CAMP) produces by the host's immune system (defensins, cathelicidins) and by the competing microorganisms (bacteriocins). In fact, the modification of anionic phosphatidylglycerol with positively charged L-lysine results in repulsion of the peptides. The polypeptide is Phosphatidylglycerol lysyltransferase (mprF) (Staphylococcus xylosus).